The primary structure comprises 946 residues: Bifunctional glutamine synthetase adenylyltransferase/adenylyl-removing enzyme (946 aa).

The adenylyl removase stretch occupies residues 1 to 440 (MKPLSSPLQQ…VFNELIGDDE (440 aa)). The segment at 449 to 946 (SEQWRELWQD…ASWQKWLVEE (498 aa)) is adenylyl transferase.

It belongs to the GlnE family. Requires Mg(2+) as cofactor.

The catalysed reaction is [glutamine synthetase]-O(4)-(5'-adenylyl)-L-tyrosine + phosphate = [glutamine synthetase]-L-tyrosine + ADP. It catalyses the reaction [glutamine synthetase]-L-tyrosine + ATP = [glutamine synthetase]-O(4)-(5'-adenylyl)-L-tyrosine + diphosphate. In terms of biological role, involved in the regulation of glutamine synthetase GlnA, a key enzyme in the process to assimilate ammonia. When cellular nitrogen levels are high, the C-terminal adenylyl transferase (AT) inactivates GlnA by covalent transfer of an adenylyl group from ATP to specific tyrosine residue of GlnA, thus reducing its activity. Conversely, when nitrogen levels are low, the N-terminal adenylyl removase (AR) activates GlnA by removing the adenylyl group by phosphorolysis, increasing its activity. The regulatory region of GlnE binds the signal transduction protein PII (GlnB) which indicates the nitrogen status of the cell. This chain is Bifunctional glutamine synthetase adenylyltransferase/adenylyl-removing enzyme, found in Escherichia coli (strain SE11).